Here is a 319-residue protein sequence, read N- to C-terminus: Lipoyl synthase (319 aa).

The [4Fe-4S] cluster site is built by C61, C66, C72, C87, C91, C94, and S300. The 217-residue stretch at 73–289 folds into the Radical SAM core domain; that stretch reads WDKKHATFMI…ESVAYSKGFL (217 aa).

The protein belongs to the radical SAM superfamily. Lipoyl synthase family. Requires [4Fe-4S] cluster as cofactor.

It localises to the cytoplasm. It catalyses the reaction [[Fe-S] cluster scaffold protein carrying a second [4Fe-4S](2+) cluster] + N(6)-octanoyl-L-lysyl-[protein] + 2 oxidized [2Fe-2S]-[ferredoxin] + 2 S-adenosyl-L-methionine + 4 H(+) = [[Fe-S] cluster scaffold protein] + N(6)-[(R)-dihydrolipoyl]-L-lysyl-[protein] + 4 Fe(3+) + 2 hydrogen sulfide + 2 5'-deoxyadenosine + 2 L-methionine + 2 reduced [2Fe-2S]-[ferredoxin]. It functions in the pathway protein modification; protein lipoylation via endogenous pathway; protein N(6)-(lipoyl)lysine from octanoyl-[acyl-carrier-protein]: step 2/2. In terms of biological role, catalyzes the radical-mediated insertion of two sulfur atoms into the C-6 and C-8 positions of the octanoyl moiety bound to the lipoyl domains of lipoate-dependent enzymes, thereby converting the octanoylated domains into lipoylated derivatives. The protein is Lipoyl synthase of Rhodopseudomonas palustris (strain BisB18).